We begin with the raw amino-acid sequence, 336 residues long: Tryptophan--tRNA ligase 1 (336 aa).

Residues 9–11 (KPT) and 17–18 (GN) each bind ATP. The short motif at 10–18 (PTGHLTLGN) is the 'HIGH' region element. Asp137 lines the L-tryptophan pocket. Residues 149–151 (GED), Val188, and 197–201 (KMGKS) each bind ATP. The 'KMSKS' region motif lies at 197-201 (KMGKS).

It belongs to the class-I aminoacyl-tRNA synthetase family. In terms of assembly, homodimer.

Its subcellular location is the cytoplasm. The catalysed reaction is tRNA(Trp) + L-tryptophan + ATP = L-tryptophyl-tRNA(Trp) + AMP + diphosphate + H(+). In terms of biological role, catalyzes the attachment of tryptophan to tRNA(Trp). This chain is Tryptophan--tRNA ligase 1, found in Streptomyces coelicolor (strain ATCC BAA-471 / A3(2) / M145).